We begin with the raw amino-acid sequence, 60 residues long: MAVPARRTSKAKKNKRRTHYKVTAPSVNFDETTGDYSRSHRVSLKGYYKGRKITKAASAE.

The protein belongs to the bacterial ribosomal protein bL32 family.

The polypeptide is Large ribosomal subunit protein bL32 (Streptococcus pneumoniae serotype 4 (strain ATCC BAA-334 / TIGR4)).